The following is a 261-amino-acid chain: Phosphate import ATP-binding protein PstB 4 (261 aa).

Residues 8–256 (IKVNNLSFYY…PHDSRTREYV (249 aa)) form the ABC transporter domain. Position 40–47 (40–47 (GPSGCGKS)) interacts with ATP.

This sequence belongs to the ABC transporter superfamily. Phosphate importer (TC 3.A.1.7) family. As to quaternary structure, the complex is composed of two ATP-binding proteins (PstB), two transmembrane proteins (PstC and PstA) and a solute-binding protein (PstS).

The protein resides in the cell inner membrane. It catalyses the reaction phosphate(out) + ATP + H2O = ADP + 2 phosphate(in) + H(+). Part of the ABC transporter complex PstSACB involved in phosphate import. Responsible for energy coupling to the transport system. This Trichormus variabilis (strain ATCC 29413 / PCC 7937) (Anabaena variabilis) protein is Phosphate import ATP-binding protein PstB 4.